The sequence spans 471 residues: GTPase Der (471 aa).

EngA-type G domains are found at residues 3-168 (PIVA…PDLS) and 178-353 (VRVA…ANHA). GTP contacts are provided by residues 9 to 16 (GRPNVGKS), 56 to 60 (DTGGI), 120 to 123 (NKVE), 184 to 191 (GRPNVGKS), 231 to 235 (DTAGM), and 296 to 299 (NKWD). The 85-residue stretch at 354-438 (RRISTRELND…PINLYFRTRE (85 aa)) folds into the KH-like domain.

Belongs to the TRAFAC class TrmE-Era-EngA-EngB-Septin-like GTPase superfamily. EngA (Der) GTPase family. In terms of assembly, associates with the 50S ribosomal subunit.

GTPase that plays an essential role in the late steps of ribosome biogenesis. This Symbiobacterium thermophilum (strain DSM 24528 / JCM 14929 / IAM 14863 / T) protein is GTPase Der.